Here is a 92-residue protein sequence, read N- to C-terminus: Translation initiation factor IF-1 (92 aa).

Positions M1–K72 constitute an S1-like domain. Residues F69–R92 are disordered.

This sequence belongs to the IF-1 family. Component of the 30S ribosomal translation pre-initiation complex which assembles on the 30S ribosome in the order IF-2 and IF-3, IF-1 and N-formylmethionyl-tRNA(fMet); mRNA recruitment can occur at any time during PIC assembly.

It is found in the cytoplasm. Its function is as follows. One of the essential components for the initiation of protein synthesis. Stabilizes the binding of IF-2 and IF-3 on the 30S subunit to which N-formylmethionyl-tRNA(fMet) subsequently binds. Helps modulate mRNA selection, yielding the 30S pre-initiation complex (PIC). Upon addition of the 50S ribosomal subunit IF-1, IF-2 and IF-3 are released leaving the mature 70S translation initiation complex. This chain is Translation initiation factor IF-1, found in Rhodopseudomonas palustris (strain ATCC BAA-98 / CGA009).